A 1164-amino-acid chain; its full sequence is Protein PLASTID MOVEMENT IMPAIRED 1-RELATED 1 (1164 aa).

The tract at residues 30 to 54 (KNPRGSVAGSNKTPTKPLSRSNLAE) is disordered. Over residues 37–51 (AGSNKTPTKPLSRSN) the composition is skewed to polar residues. The 149-residue stretch at 69-217 (INHVRNRRFN…TLSMSFGYTV (149 aa)) folds into the C2 NT-type domain. Positions 224–263 (PASSGSTQNFRSSSNVKQTSNNTGLTRAISAKSSLGNGKS) are enriched in polar residues. 4 disordered regions span residues 224–268 (PASS…SRRY), 466–486 (APEE…PKDA), 1038–1063 (SELK…PMEE), and 1124–1164 (GSAK…IMPK). 2 stretches are compositionally biased toward basic and acidic residues: residues 469–486 (EGNK…PKDA) and 1052–1062 (SDAKKEEKPME).

The protein localises to the cytoplasm. Functionally, together with PMI1, necessary for chloroplast and nuclear photorelocation movements via the regulation of chloroplast-actin (cp-actin) filaments in pavement cells. The polypeptide is Protein PLASTID MOVEMENT IMPAIRED 1-RELATED 1 (Arabidopsis thaliana (Mouse-ear cress)).